The sequence spans 563 residues: MAKYDFVMLWILTLTAAIAAARPMVVDKGRQITYTGLDRNGIEVFLGIPFGHDTGGKNRFKPPVAVVPPRGSHINATVYGPICPQELRAGSRGKLVISENCLNLNIGRPKNMTSHDKLAVMVTIYGGGYWVGHNQDPRWHADNMVKESVANGRPIIHVAMNYRLGVFGFAQTTALRTERSENAALRDQRLALEWVRDNIAAFGGDPKRVTIFGQSSGGVSVGMQMLAYGGKQPVPYQQGICQSQVLEPGITGNFTSTAMELVTDKANCTSGDFNSEAALACLRELDTETLLAAAIATYQNGVDHNIGDIWLPSVDGDFLPDAPSVLVAQRRFAPVTSMMGWCEDDVTRFVYPNITTSKGVADFIASYAPNVSRKNIDTLLKLYPTDEFPENKTAGLSRDFYRTARIFRDIVMTCEPFLVGEHAAAEGADAYFFSWNQTIAPSALGVLHGADLPYVYANLSAYIPPGSPIRPTASDYELSHRASRSWSTFGSTKEPSLPGHNTFKGFRKSFSKHNEILVFVAGGPNEGLSNIDDHGPHSVIGGQKLRERCAFINSPEMIHELRF.

A signal peptide spans M1–A20. An intrachain disulfide couples C83 to C101. Residue S215 is the Acyl-ester intermediate of the active site. A disulfide bridge connects residues C268 and C281.

This sequence belongs to the type-B carboxylesterase/lipase family.

The protein localises to the secreted. It carries out the reaction a triacylglycerol + H2O = a diacylglycerol + a fatty acid + H(+). This Arthroderma benhamiae (strain ATCC MYA-4681 / CBS 112371) (Trichophyton mentagrophytes) protein is Secreted lipase ARB07186/07185.